Reading from the N-terminus, the 359-residue chain is 4-galactosyl-N-acetylglucosaminide 3-alpha-L-fucosyltransferase FUT6 (359 aa).

Topologically, residues 1–14 (MDPLGPAKPQWSCR) are cytoplasmic. Residues 15–34 (CCLTTLLFQLLVAVCFFSYL) form a helical; Signal-anchor for type II membrane protein membrane-spanning segment. Residues 35–359 (RVSRDDPTVY…QTRSITAWFT (325 aa)) are Lumenal-facing. 4 N-linked (GlcNAc...) asparagine glycosylation sites follow: Asn46, Asn91, Asn153, and Asn184. Positions 73-112 (KPTALPRCSEMLPGTADCNITADRKVYPQADAVIVHHREV) are determines site-specific fucosylation.

Belongs to the glycosyltransferase 10 family. In terms of assembly, homodimer and monomer. Monomer (secreted form). In terms of processing, N-glycosylated. Proteolytic cleavage releases a secreted glycoform of 43 kDa.

Its subcellular location is the golgi apparatus. The protein resides in the golgi stack membrane. It is found in the secreted. The enzyme catalyses a beta-D-galactosyl-(1-&gt;4)-N-acetyl-beta-D-glucosaminyl derivative + GDP-beta-L-fucose = a beta-D-galactosyl-(1-&gt;4)-[alpha-L-fucosyl-(1-&gt;3)]-N-acetyl-beta-D-glucosaminyl derivative + GDP + H(+). It catalyses the reaction an N-acetyl-alpha-neuraminyl-(2-&gt;3)-beta-D-galactosyl-(1-&gt;4)-N-acetyl-beta-D-glucosaminyl derivative + GDP-beta-L-fucose = an alpha-Neu5Ac-(2-&gt;3)-beta-D-Gal-(1-&gt;4)-[alpha-L-Fuc-(1-&gt;3)]-beta-D-GlcNAc derivative + GDP + H(+). It carries out the reaction an alpha-Neu5Ac-(2-&gt;3)-beta-D-Gal-(1-&gt;4)-beta-D-GlcNAc-(1-&gt;3)-beta-D-Gal-(1-&gt;4)-[alpha-L-Fuc-(1-&gt;3)]-beta-D-GlcNAc derivative + GDP-beta-L-fucose = an alpha-Neu5Ac-(2-&gt;3)-beta-D-Gal-(1-&gt;4)-[alpha-L-Fuc-(1-&gt;3)]-beta-D-GlcNAc-(1-&gt;3)-beta-D-Gal-(1-&gt;4)-[alpha-L-Fuc-(1-&gt;3)]-beta-D-GlcNAc derivative + GDP + H(+). The catalysed reaction is a neolactoside nLc6Cer + GDP-beta-L-fucose = beta-D-Gal-(1-&gt;4)-[alpha-L-Fuc-(1-&gt;3)]-beta-D-GlcNAc-(1-&gt;3)-beta-D-Gal-(1-&gt;4)-beta-D-GlcNAc-(1-&gt;3)-beta-D-Gal-(1-&gt;4)-beta-D-Glc-(1&lt;-&gt;1')-Cer + GDP + H(+). The enzyme catalyses a neolactoside nLc6Cer + GDP-beta-L-fucose = beta-D-galactosyl-(1-&gt;4)-N-acetyl-beta-D-glucosaminyl-(1-&gt;3)-beta-D-galactosyl-(1-&gt;4)-[alpha-L-fucosyl-(1-&gt;3)]-N-acetyl-beta-D-glucosaminyl-(1-&gt;3)-beta-D-galactosyl-(1-&gt;4)-beta-D-glucosyl-(1&lt;-&gt;1')-ceramide + GDP + H(+). It catalyses the reaction a neolactoside VI(3)-alpha-NeuNAc-nLc6Cer + GDP-beta-L-fucose = a neolactoside VI(3)-alpha-NeuAc,V(3)-alphaFuc-nLc6Cer + GDP + H(+). It carries out the reaction beta-D-galactosyl-(1-&gt;4)-N-acetyl-D-glucosamine + GDP-beta-L-fucose = beta-D-galactosyl-(1-&gt;4)-[alpha-L-fucosyl-(1-&gt;3)]-N-acetyl-D-glucosamine + GDP + H(+). The catalysed reaction is N-acetyl-alpha-neuraminosyl-(2-&gt;3)-beta-D-galactosyl-(1-&gt;4)-N-acetyl-beta-D-glucosamine + GDP-beta-L-fucose = N-acetyl-alpha-neuraminosyl-(2-&gt;3)-beta-D-galactosyl-(1-&gt;4)-[alpha-L-fucosyl-(1-&gt;3)]-N-acetyl-beta-D-glucosamine + GDP + H(+). The enzyme catalyses lactose + GDP-beta-L-fucose = beta-D-galactosyl-(1-&gt;4)-[alpha-L-fucosyl-(1-&gt;3)]-D-glucose + GDP + H(+). It catalyses the reaction alpha-L-Fuc-(1-&gt;2)-beta-D-Gal-(1-&gt;4)-D-Glc + GDP-beta-L-fucose = alpha-L-Fuc-(1-&gt;2)-beta-D-Gal-(1-&gt;4)-[alpha-L-Fuc-(1-&gt;3)]-D-Glc + GDP + H(+). It carries out the reaction a beta-D-galactosyl-(1-&gt;4)-N-acetyl-beta-D-6-sulfooxy-glucosaminyl derivative + GDP-beta-L-fucose = a beta-D-galactosyl-(1-&gt;4)-[alpha-L-fucosyl-(1-&gt;3)]-N-acetyl-beta-D-6-sulfooxy-glucosaminyl derivative + GDP + H(+). It functions in the pathway protein modification; protein glycosylation. Functionally, catalyzes the transfer of L-fucose, from a guanosine diphosphate-beta-L-fucose, to the N-acetyl glucosamine (GlcNAc) of a distal alpha2,3 sialylated lactosamine unit of a glycoprotein- or glycolipid-linked sialopolylactosamines chain or of a distal or internal lactosamine unit of a neutral glycoprotein- or glycolipid-linked polylactosamines chain through an alpha-1,3 glycosidic linkage and participates in surface expression of the sialyl Lewis X (sLe(x)), Lewis X (Le(x)) and non sialylated VIM2 determinants. Moreover transfers fucose to H-type 2 (Fucalpha1-2Galbeta1-4GlcNAc) chain acceptor substrates and participates in difucosylated sialyl Lewis x determinants. Also fucosylates a polylactosamine substrate having a 6 sulfate modification at the GlcNAc moiety and gives rise to sialyl and non-sialyl 6-sulfo lewis X. Does not have activity towards type 1 ((Galbeta1-3GlcNAc)) and H-type 1 chain (Fucalpha1-2Galbeta1-3GlcNAc) acceptors substrates. The sequence is that of 4-galactosyl-N-acetylglucosaminide 3-alpha-L-fucosyltransferase FUT6 from Gorilla gorilla gorilla (Western lowland gorilla).